A 282-amino-acid chain; its full sequence is Heat stress transcription factor A-6a (282 aa).

Residues 17-111 (PTAFLTKTYN…LLKNIKRRKT (95 aa)) mediate DNA binding. A hydrophobic repeat HR-A/B region spans residues 111 to 177 (TSSQTQTQSL…MMMNFLLKKI (67 aa)). The Bipartite nuclear localization signal signature appears at 175–190 (KKIKKPSFLQSLRKRN). An AHA motif is present at residues 261 to 270 (EGIWKGFVLS).

This sequence belongs to the HSF family. Class A subfamily. As to quaternary structure, homotrimer. Exhibits temperature-dependent phosphorylation.

The protein resides in the nucleus. Its function is as follows. Transcriptional activator that specifically binds DNA sequence 5'-AGAAnnTTCT-3' known as heat shock promoter elements (HSE). The protein is Heat stress transcription factor A-6a (HSFA6A) of Arabidopsis thaliana (Mouse-ear cress).